A 55-amino-acid polypeptide reads, in one-letter code: Large ribosomal subunit protein bL32 (55 aa).

The segment at 1–27 (MAVQQNKPTRSKRGMRRSHDALTTATL) is disordered.

This sequence belongs to the bacterial ribosomal protein bL32 family.

The polypeptide is Large ribosomal subunit protein bL32 (Yersinia enterocolitica serotype O:8 / biotype 1B (strain NCTC 13174 / 8081)).